We begin with the raw amino-acid sequence, 482 residues long: UDP-N-acetylmuramate--L-alanine ligase (482 aa).

119 to 125 provides a ligand contact to ATP; that stretch reads GTHGKTT.

The protein belongs to the MurCDEF family.

The protein localises to the cytoplasm. The enzyme catalyses UDP-N-acetyl-alpha-D-muramate + L-alanine + ATP = UDP-N-acetyl-alpha-D-muramoyl-L-alanine + ADP + phosphate + H(+). The protein operates within cell wall biogenesis; peptidoglycan biosynthesis. In terms of biological role, cell wall formation. In Cyanothece sp. (strain PCC 7425 / ATCC 29141), this protein is UDP-N-acetylmuramate--L-alanine ligase.